The following is a 473-amino-acid chain: ATP synthase subunit beta (473 aa).

158-165 serves as a coordination point for ATP; sequence GGAGVGKT.

The protein belongs to the ATPase alpha/beta chains family. In terms of assembly, F-type ATPases have 2 components, CF(1) - the catalytic core - and CF(0) - the membrane proton channel. CF(1) has five subunits: alpha(3), beta(3), gamma(1), delta(1), epsilon(1). CF(0) has three main subunits: a(1), b(2) and c(9-12). The alpha and beta chains form an alternating ring which encloses part of the gamma chain. CF(1) is attached to CF(0) by a central stalk formed by the gamma and epsilon chains, while a peripheral stalk is formed by the delta and b chains.

Its subcellular location is the cell membrane. The catalysed reaction is ATP + H2O + 4 H(+)(in) = ADP + phosphate + 5 H(+)(out). In terms of biological role, produces ATP from ADP in the presence of a proton gradient across the membrane. The catalytic sites are hosted primarily by the beta subunits. The polypeptide is ATP synthase subunit beta (Geobacillus stearothermophilus (Bacillus stearothermophilus)).